A 558-amino-acid polypeptide reads, in one-letter code: Scarecrow-like protein 6 (558 aa).

Residues 19–90 (FSSSFPQPPS…GGDATTDEQC (72 aa)) are disordered. A compositionally biased stretch (low complexity) spans 54-75 (SVLDSLISPTSSSTVSSSHGGN). Residues 196-554 (KRLNPGPVGI…TELVGVSAWR (359 aa)) enclose the GRAS domain. The tract at residues 203–257 (VGITEQLVKAAEVIESDTCLAQGILARLNQQLSSPVGKPLERAAFYFKEALNNLL) is leucine repeat I (LRI). Residues 276-340 (YKSFSEISPV…DNAAPLSLKI (65 aa)) are VHIID. Positions 307 to 311 (LHIID) match the VHIID motif. Positions 356–388 (FTQDNLKHFASEINISLDIQVLSLDLLGSISWP) are leucine repeat II (LRII). The interval 396-479 (VAVNISAASF…RFLIQPEIEK (84 aa)) is PFYRE. The segment at 482–554 (LDRSRPIERP…TELVGVSAWR (73 aa)) is SAW.

The protein belongs to the GRAS family. As to quaternary structure, interacts with Meloidogyne incognita 16D10. In terms of tissue distribution, expressed in seedlings, roots, leaves, flowers and siliques.

The protein resides in the nucleus. Functionally, probable transcription factor involved in plant development. This chain is Scarecrow-like protein 6 (SCL6), found in Arabidopsis thaliana (Mouse-ear cress).